The primary structure comprises 325 residues: Apoptosis-enhancing nuclease (325 aa).

The short motif at 27-35 (RKRHKRRSR) is the Nucleolar localization signal element. Residues 85–105 (RAGSGSAPCSRRPAPGKASGP) are disordered. One can recognise an Exonuclease domain in the interval 110 to 266 (CVAIDCEMVG…EDATTAMELY (157 aa)). The Nuclear localization signal signature appears at 165-188 (RQHMRKAVPFQVAQKEILKLLKGK). Residues 281–325 (LWTCPEDREPDSSTDMEQYMEDQYWPDDLAHGSRGGAREAQDRRN) are disordered. Over residues 308–325 (DLAHGSRGGAREAQDRRN) the composition is skewed to basic and acidic residues.

The protein resides in the nucleus. Its subcellular location is the nucleolus. Its function is as follows. Exonuclease with activity against single- and double-stranded DNA and RNA. Mediates p53-induced apoptosis. When induced by p53 following DNA damage, digests double-stranded DNA to form single-stranded DNA and amplifies DNA damage signals, leading to enhancement of apoptosis. This chain is Apoptosis-enhancing nuclease (AEN), found in Homo sapiens (Human).